Consider the following 355-residue polypeptide: C-C chemokine receptor type 3 (355 aa).

Residues 1–34 (MTTSLDTVETFGPTSYDDDMGLLCEKADVGALIA) are Extracellular-facing. Residues 35–62 (QFVPPLYSLVFMVGLLGNVVVVMILIKY) traverse the membrane as a helical segment. The Cytoplasmic segment spans residues 63 to 72 (RRLRIMTNIY). A helical transmembrane segment spans residues 73–93 (LLNLAISDLLFLFTLPFWIHY). The Extracellular segment spans residues 94–107 (VRERNWVFSHGMCK). A disulfide bond links Cys-106 and Cys-183. A helical transmembrane segment spans residues 108–129 (VLSGFYHTGLYSEIFFIILLTI). Residues 130–146 (DRYLAIVHAVFALRART) are Cytoplasmic-facing. Residues 147 to 171 (VTFGVITSIVTWGLAVLAALPEFIF) traverse the membrane as a helical segment. At 172-203 (YGTEKLFPKTLCSAIYPQDTVYSWRHFHTLKM) the chain is on the extracellular side. The chain crosses the membrane as a helical span at residues 204–223 (TILCLALPLLVMAICYTGII). The Cytoplasmic portion of the chain corresponds to 224-239 (KTLLRCPSKKKYKAIR). Residues 240–264 (LIFVIMAVFFIFWTPYNVAILISTY) form a helical membrane-spanning segment. Topologically, residues 265–281 (QSVLFGLDCERSKHLDL) are extracellular. A helical transmembrane segment spans residues 282–305 (FVLATEVIAYSHCCVNPVIYAFVG). Over 306–355 (ERFRKYLRHFFHRHVLMHLGKYIPFLPSEKLERTSSVSPSTAEPELSIVF) the chain is Cytoplasmic.

This sequence belongs to the G-protein coupled receptor 1 family.

The protein resides in the cell membrane. Functionally, receptor for C-C type chemokine. Binds and responds to a variety of chemokines, including CCL11, CCL26, CCL7, CCL13, RANTES(CCL5) and CCL15. Subsequently transduces a signal by increasing the intracellular calcium ions level. In addition acts as a possible functional receptor for NARS1. The chain is C-C chemokine receptor type 3 (CCR3) from Macaca mulatta (Rhesus macaque).